The following is an 84-amino-acid chain: Putative defensin-like protein 165 (84 aa).

The N-terminal stretch at 1 to 27 (MSTKLFSYFMLLVVLFSVLTIIPKTEA) is a signal peptide. 4 disulfides stabilise this stretch: cysteine 31–cysteine 78, cysteine 41–cysteine 60, cysteine 46–cysteine 72, and cysteine 50–cysteine 74.

Belongs to the DEFL family.

It localises to the secreted. The sequence is that of Putative defensin-like protein 165 (LCR12) from Arabidopsis thaliana (Mouse-ear cress).